We begin with the raw amino-acid sequence, 178 residues long: Vegetative protein (178 aa).

2 disordered regions span residues alanine 67–glycine 102 and asparagine 138–leucine 158. The segment covering proline 76–glycine 90 has biased composition (low complexity).

The polypeptide is Vegetative protein (vegA) (Myxococcus xanthus).